The primary structure comprises 233 residues: Adenosine 5'-phosphosulfate reductase (233 aa).

Positions 120, 121, 203, and 206 each coordinate [4Fe-4S] cluster. The active-site Nucleophile; cysteine thiosulfonate intermediate is cysteine 229.

The protein belongs to the PAPS reductase family. CysH subfamily. The cofactor is [4Fe-4S] cluster.

It localises to the cytoplasm. It catalyses the reaction [thioredoxin]-disulfide + sulfite + AMP + 2 H(+) = adenosine 5'-phosphosulfate + [thioredoxin]-dithiol. It functions in the pathway sulfur metabolism; hydrogen sulfide biosynthesis; sulfite from sulfate. In terms of biological role, catalyzes the formation of sulfite from adenosine 5'-phosphosulfate (APS) using thioredoxin as an electron donor. The sequence is that of Adenosine 5'-phosphosulfate reductase from Bacillus pumilus (strain SAFR-032).